The primary structure comprises 1025 residues: MVAMAEAEAGVAVEVRGLPPAVPDELLTLYFENRRRSGGGPVLSWQRLGCGGVLTFREPADAERVLAQADHELHGAQLSLRPAPPRAPARLLLQGLPPGTTPQRLEQHVQALLRASGLPVQPCCALASPRPDRALVQLPKPLSEADVRVLEEQAQNLGLEGTLVSLARVPQARAVRVVGDGASVDLLLLELYLENERRSGGGPLEDLQRLPGPLGTVASFQQWQVAERVLQQEHRLQGSELSLVPHYDILEPEELAENTSGGDHPSTQGPRATKHALLRTGGLVTALQGAGTVTMGSGEEPGQSGASLRTGPMVQGRGIMTTGSGQEPGQSGTSLRTGPMGSLGQAEQVSSMPMGSLEHEGLVSLRPVGLQEQEGPMSLGPVGSAGPVETSKGLLGQEGLVEIAMDSPEQEGLVGPMEITMGSLEKAGPVSPGCVKLAGQEGLVEMVLLMEPGAMRFLQLYHEDLLAGLGDVALLPLEGPDMTGFRLCGAQASCQAAEEFLRSLLGSISCHVLCLEHPGSARFLLGPEGQHLLQGLEAQFQCVFGTERLATATLDTGLEEVDPTEALPVLPGNAHTLWTPDSTGGDQEDVSLEEVRELLATLEGLDLDGEDWLPRELEEEGPQEQPEEEVTPGHEEEEPVAPSTVAPRWLEEEAALQLALHRSLEPQGQVAEQEEAAALRQALTLSLLEQPPLEAEEPPDGGTDGKAQLVVHSAFEQDVEELDRALRAALEVHVQEETVGPWRRTLPAELRARLERCHGVSVALRGDCTILRGFGAHPARAARHLVALLAGPWDQSLAFPLAASGPTLAGQTLKGPWNNLERLAENTGEFQEVVRAFYDTLDAARSSIRVVRVERVSHPLLQQQYELYRERLLQRCERRPVEQVLYHGTTAPAVPDICAHGFNRSFCGRNATVYGKGVYFARRASLSVQDRYSPPNADGHKAVFVARVLTGDYGQGRRGLRAPPLRGPGHVLLRYDSAVDCICQPSIFVIFHDTQALPTHLITCEHVPRASPDDPSGLPGRSPDT.

Thr-101 is modified (phosphothreonine). Residue Glu-106 is modified to ADP-ribosyl glutamic acid. At Lys-140 the chain carries N6-(ADP-ribosyl)lysine. Positions 318–346 (GIMTTGSGQEPGQSGTSLRTGPMGSLGQA) are disordered. Residues 321 to 336 (TTGSGQEPGQSGTSLR) show a composition bias toward polar residues. Ser-378, Ser-423, and Ser-431 each carry phosphoserine. Disordered stretches follow at residues 569–589 (VLPG…DQED) and 617–644 (LEEE…APST). Over residues 617–639 (LEEEGPQEQPEEEVTPGHEEEEP) the composition is skewed to acidic residues. 2 consecutive short sequence motifs (ubiquitin-interacting) follow at residues 650 to 667 (LEEE…LEPQ) and 673 to 690 (QEEA…LLEQ). Position 663 is a phosphoserine (Ser-663). The interval 700-907 (DGGTDGKAQL…CAHGFNRSFC (208 aa)) is myc binding. One can recognise a PARP catalytic domain in the interval 806–1025 (PTLAGQTLKG…SGLPGRSPDT (220 aa)). Positions 831-838 (QEVVRAFY) match the PIP-box motif. The residue at position 882 (Glu-882) is an ADP-ribosyl glutamic acid. Lys-916 carries the N6-(ADP-ribosyl)lysine modification. An N6-acetyllysine modification is found at Lys-916. A disordered region spans residues 1006–1025 (HVPRASPDDPSGLPGRSPDT). At Ser-1011 the chain carries Phosphoserine.

It belongs to the ARTD/PARP family. As to quaternary structure, interacts with MYC. Interacts with PARP14. Interacts (via-PIP box and ubiquitin-interacting motifs) with PCNA. Stimulated through its phosphorylation by CDK2. Acquires CDK-dependent phosphorylation through late-G1 to S phase, and from prometaphase to cytokinesis in the nucleolar organizing regions. Phosphorylation is suppressed in growth-arrested cells. Post-translationally, auto-mono-ADP-ribosylated on glutamate and lysine residues. Highly expressed in spleen and thymus. Intermediate levels in liver, kidney, pancreas, prostate, testis, ovary, intestine, and leukocytes. Low expression in heart, brain, placenta, lung, skeletal muscle, and colon.

Its subcellular location is the nucleus. It localises to the nucleolus. The protein resides in the cytoplasm. The enzyme catalyses L-lysyl-[protein] + NAD(+) = N(6)-(ADP-D-ribosyl)-L-lysyl-[protein] + nicotinamide + H(+). It carries out the reaction L-aspartyl-[protein] + NAD(+) = 4-O-(ADP-D-ribosyl)-L-aspartyl-[protein] + nicotinamide. It catalyses the reaction L-glutamyl-[protein] + NAD(+) = 5-O-(ADP-D-ribosyl)-L-glutamyl-[protein] + nicotinamide. ADP-ribosyltransferase that mediates mono-ADP-ribosylation of glutamate and aspartate residues on target proteins. In contrast to PARP1 and PARP2, it is not able to mediate poly-ADP-ribosylation. Catalyzes mono-ADP-ribosylation of GSK3B, leading to negatively regulate GSK3B kinase activity. Involved in translesion DNA synthesis in response to DNA damage via its interaction with PCNA. The chain is Protein mono-ADP-ribosyltransferase PARP10 from Homo sapiens (Human).